The following is a 184-amino-acid chain: MFSKSYQITKEMYEARGWQIIKEDELTILAKVNSRENTNPEFAIAKFIKTTQEIKSPPLSQIIDFSSNEYVCVTIICDGSITTNVKKIEQTTKGKVEIFHNKDLQMNITKYHLQPLFNKLLDEEAKDFKKKYIKCKIENGKKIILQSFPSMSKSDPIARFFKYQSGDVIKITNKDGFVSYRIVK.

Belongs to the archaeal Rpo5/eukaryotic RPB5 RNA polymerase subunit family.

Functionally, component of the DNA-dependent RNA polymerase that catalyzes the transcription in the cytoplasm of viral DNA into RNA using the four ribonucleoside triphosphates as substrates. This chain is Putative DNA-directed RNA polymerase subunit 454R, found in Invertebrate iridescent virus 6 (IIV-6).